A 135-amino-acid chain; its full sequence is S-protein homolog 7 (135 aa).

Residues 1 to 20 (MNNLFVLVIIIVLSAGSNNG) form the signal peptide.

Belongs to the plant self-incompatibility (S1) protein family.

Its subcellular location is the secreted. This Arabidopsis thaliana (Mouse-ear cress) protein is S-protein homolog 7.